We begin with the raw amino-acid sequence, 158 residues long: Transcriptional repressor NrdR (158 aa).

A zinc finger spans residues 3 to 34 (CPFCNSEETRVIDTRLTDDGHVVRRRRECEHC). Positions 49 to 139 (IFVVKKGGQR…VYKEFRDLDH (91 aa)) constitute an ATP-cone domain.

The protein belongs to the NrdR family. It depends on Zn(2+) as a cofactor.

Negatively regulates transcription of bacterial ribonucleotide reductase nrd genes and operons by binding to NrdR-boxes. The chain is Transcriptional repressor NrdR from Kosmotoga olearia (strain ATCC BAA-1733 / DSM 21960 / TBF 19.5.1).